Reading from the N-terminus, the 473-residue chain is Xylan O-acetyltransferase 14 (473 aa).

Over residues 1 to 17 (MTTTGSTPPRKNRSNVT) the composition is skewed to polar residues. Residues 1 to 22 (MTTTGSTPPRKNRSNVTGGEGG) are disordered. At 1–54 (MTTTGSTPPRKNRSNVTGGEGGSLEEYAWRAAGEAAAAKKATRAWGVSVSLRSH) the chain is on the cytoplasmic side. The chain crosses the membrane as a helical; Signal-anchor for type II membrane protein span at residues 55–75 (FSSLVLLLLLLLVALAVSATT). The tract at residues 76–101 (KNGDPAETPHAPPLPPPASIKLPSSS) is disordered. Residues 76–473 (KNGDPAETPH…NQLLYAHIVS (398 aa)) are Lumenal-facing. Cystine bridges form between Cys108–Cys159, Cys130–Cys195, Cys139–Cys455, and Cys370–Cys451. The GDS motif signature appears at 182 to 184 (GDS). The active-site Nucleophile is Ser184. Residues Asn209, Asn223, and Asn414 are each glycosylated (N-linked (GlcNAc...) asparagine). Residue Asp450 is the Proton donor of the active site. The DXXH motif signature appears at 450–453 (DCIH). The active-site Proton acceptor is the His453.

This sequence belongs to the PC-esterase family. TBL subfamily.

It is found in the golgi apparatus membrane. Its function is as follows. Xylan acetyltransferase required for 2-O- and 3-O-monoacetylation of xylosyl residues in xylan. Catalyzes the 2-O-acetylation of xylan, followed by nonenzymatic acetyl migration to the O-3 position, resulting in products that are monoacetylated at both O-2 and O-3 positions. This Oryza sativa subsp. japonica (Rice) protein is Xylan O-acetyltransferase 14.